Here is a 773-residue protein sequence, read N- to C-terminus: Phenylalanine--tRNA ligase beta subunit (773 aa).

Positions 39–150 (LKAPDKVVVG…GKLELGRPLN (112 aa)) constitute a tRNA-binding domain. In terms of domain architecture, B5 spans 391 to 467 (KELPIIPISI…RIIGIDNIAS (77 aa)). Mg(2+)-binding residues include Asp445, Asp451, Glu454, and Glu455. The 92-residue stretch at 682-773 (SKFPAITRDL…TLKNLGLDLR (92 aa)) folds into the FDX-ACB domain.

It belongs to the phenylalanyl-tRNA synthetase beta subunit family. Type 1 subfamily. Tetramer of two alpha and two beta subunits. The cofactor is Mg(2+).

The protein localises to the cytoplasm. It carries out the reaction tRNA(Phe) + L-phenylalanine + ATP = L-phenylalanyl-tRNA(Phe) + AMP + diphosphate + H(+). In Campylobacter jejuni subsp. jejuni serotype O:2 (strain ATCC 700819 / NCTC 11168), this protein is Phenylalanine--tRNA ligase beta subunit (pheT).